A 244-amino-acid chain; its full sequence is 3-deoxy-manno-octulosonate cytidylyltransferase (244 aa).

This sequence belongs to the KdsB family.

The protein resides in the cytoplasm. The catalysed reaction is 3-deoxy-alpha-D-manno-oct-2-ulosonate + CTP = CMP-3-deoxy-beta-D-manno-octulosonate + diphosphate. Its pathway is nucleotide-sugar biosynthesis; CMP-3-deoxy-D-manno-octulosonate biosynthesis; CMP-3-deoxy-D-manno-octulosonate from 3-deoxy-D-manno-octulosonate and CTP: step 1/1. It participates in bacterial outer membrane biogenesis; lipopolysaccharide biosynthesis. In terms of biological role, activates KDO (a required 8-carbon sugar) for incorporation into bacterial lipopolysaccharide in Gram-negative bacteria. The sequence is that of 3-deoxy-manno-octulosonate cytidylyltransferase from Anaeromyxobacter sp. (strain Fw109-5).